We begin with the raw amino-acid sequence, 1036 residues long: Presequence protease, mitochondrial (1036 aa).

A mitochondrion-targeting transit peptide spans 1-15 (MWRFSGRRGLCAVQR). His-104 contacts Zn(2+). Catalysis depends on Glu-107, which acts as the Proton acceptor. 2 residues coordinate Zn(2+): His-108 and Glu-205. Residues Cys-119 and Cys-556 are joined by a disulfide bond. Lys-759 bears the N6-acetyllysine mark. Lys-770 bears the N6-acetyllysine; alternate mark. The residue at position 770 (Lys-770) is an N6-succinyllysine; alternate. A disordered region spans residues 806-833 (SKKERKPVRPHIVEKPTPSGPSGAAHVS). Lys-848 is modified (N6-succinyllysine). Lys-883 is modified (N6-acetyllysine). Lys-945 carries the N6-succinyllysine modification.

It belongs to the peptidase M16 family. PreP subfamily. In terms of assembly, monomer and homodimer; homodimerization is induced by binding of the substrate. The cofactor is Zn(2+). A disulfide bond locks the enzyme in the closed conformation preventing substrate entry into the catalytic chamber.

The protein localises to the mitochondrion matrix. With respect to regulation, mainly exists in a closed and catalytically competent conformation but a closed-to-open switch allows substrate entry into the catalytic chamber. Substrate binding induces closure and dimerization. A disulfide bond may lock the enzyme in a closed conformation preventing substrate entry into the catalytic chamber, participating in redox regulation of the enzyme. Inhibited by metal-chelating agents. Inhibited by nickel and zinc excess, and slightly activated by manganese. In terms of biological role, metalloendopeptidase of the mitochondrial matrix that functions in peptide cleavage and degradation rather than in protein processing. Has an ATP-independent activity. Specifically cleaves peptides in the range of 5 to 65 residues. Shows a preference for cleavage after small polar residues and before basic residues, but without any positional preference. Degrades the transit peptides of mitochondrial proteins after their cleavage. Also degrades other unstructured peptides. It is also able to degrade amyloid-beta protein 40, one of the peptides produced by APP processing, when it accumulates in mitochondrion. It is a highly efficient protease, at least toward amyloid-beta protein 40. Cleaves that peptide at a specific position and is probably not processive, releasing digested peptides intermediates that can be further cleaved subsequently. It is also able to degrade amyloid-beta protein 42. In Mus musculus (Mouse), this protein is Presequence protease, mitochondrial.